Here is a 371-residue protein sequence, read N- to C-terminus: COP9 signalosome complex subunit 5 (371 aa).

Residues 51–188 (VKISAVALIK…IGAFRTYPEG (138 aa)) form the MPN domain. His134, His136, and Asp147 together coordinate Zn(2+). A JAMM motif motif is present at residues 134–147 (HSHPGYGCWLSGID). Low complexity predominate over residues 278-292 (NSSSKLKLKPTQPTT). 2 disordered regions span residues 278-333 (NSSS…SRIT) and 352-371 (TPLT…QGRY). Residues 293–313 (KGKETTEGSDKKLKKGEKEFS) show a composition bias toward basic and acidic residues. Residues 323–333 (NKVTQESSRIT) show a composition bias toward polar residues.

Belongs to the peptidase M67A family. CSN5 subfamily. In terms of assembly, component of the COP9 signalosome (CSN) complex.

The protein resides in the cytoplasm. It localises to the nucleus. In terms of biological role, catalytic Component of the COP9 signalosome (CSN) complex that acts as an regulator of the ubiquitin (Ubl) conjugation pathway by mediating the deneddylation of the cullin subunit of SCF-type E3 ubiquitin-protein ligase complexes. The chain is COP9 signalosome complex subunit 5 (RRI1) from Cryptococcus neoformans var. neoformans serotype D (strain B-3501A) (Filobasidiella neoformans).